The chain runs to 55 residues: Conotoxin Cal22d (55 aa).

The propeptide occupies 1 to 5 (GRPSA).

Post-translationally, contains 4 disulfide bonds. In terms of tissue distribution, expressed by the venom duct.

It is found in the secreted. In terms of biological role, probable neurotoxin with unknown target. Possibly targets ion channels. The sequence is that of Conotoxin Cal22d from Californiconus californicus (California cone).